Reading from the N-terminus, the 114-residue chain is Methylamine utilization protein MauL (114 aa).

Its pathway is one-carbon metabolism; methylamine degradation. Its function is as follows. Probably involved in TTQ prosthetic group biosynthesis. This chain is Methylamine utilization protein MauL (mauL), found in Methylorubrum extorquens (strain ATCC 14718 / DSM 1338 / JCM 2805 / NCIMB 9133 / AM1) (Methylobacterium extorquens).